Here is a 488-residue protein sequence, read N- to C-terminus: Cruciferin (488 aa).

An N-terminal signal peptide occupies residues 1-23 (MARLSSLLSFSLALLTFLHGSTA). Cystine bridges form between C30/C63 and C105/C305. 2 consecutive Cupin type-1 domains span residues 35-262 (LNAL…RTAQ) and 311-460 (DNLD…EEAR). Residues 116–163 (QPSGGSPFGEGQGQGQQGQGQGHQGQGQGQQGQQGQQGQQSQGQGFRD) are disordered. Residues 121 to 147 (SPFGEGQGQGQQGQGQGHQGQGQGQQG) show a composition bias toward gly residues. Low complexity predominate over residues 148 to 160 (QQGQQGQQSQGQG).

This sequence belongs to the 11S seed storage protein (globulins) family. As to quaternary structure, hexamer; each subunit is composed of an acidic and a basic chain derived from a single precursor and linked by a disulfide bond.

Its subcellular location is the rough endoplasmic reticulum. In terms of biological role, this is a seed storage protein. The protein is Cruciferin (CRUA) of Brassica napus (Rape).